Here is a 360-residue protein sequence, read N- to C-terminus: Phospho-N-acetylmuramoyl-pentapeptide-transferase (360 aa).

10 helical membrane-spanning segments follow: residues 27-47 (GAMI…INSL), 71-91 (TPTM…LLWA), 93-113 (LASV…AIGF), 128-148 (FSGK…AFTI), 168-188 (LVIN…VGAG), 199-219 (GLAI…AYLS), 239-259 (LAVV…FNAP), 262-282 (AIFM…TVAV), 288-308 (IVLA…IIQV), and 337-357 (QVVI…LSTL).

Belongs to the glycosyltransferase 4 family. MraY subfamily. Mg(2+) serves as cofactor.

It localises to the cell inner membrane. It catalyses the reaction UDP-N-acetyl-alpha-D-muramoyl-L-alanyl-gamma-D-glutamyl-meso-2,6-diaminopimeloyl-D-alanyl-D-alanine + di-trans,octa-cis-undecaprenyl phosphate = di-trans,octa-cis-undecaprenyl diphospho-N-acetyl-alpha-D-muramoyl-L-alanyl-D-glutamyl-meso-2,6-diaminopimeloyl-D-alanyl-D-alanine + UMP. It participates in cell wall biogenesis; peptidoglycan biosynthesis. In terms of biological role, catalyzes the initial step of the lipid cycle reactions in the biosynthesis of the cell wall peptidoglycan: transfers peptidoglycan precursor phospho-MurNAc-pentapeptide from UDP-MurNAc-pentapeptide onto the lipid carrier undecaprenyl phosphate, yielding undecaprenyl-pyrophosphoryl-MurNAc-pentapeptide, known as lipid I. In Brucella ovis (strain ATCC 25840 / 63/290 / NCTC 10512), this protein is Phospho-N-acetylmuramoyl-pentapeptide-transferase.